The primary structure comprises 231 residues: Large ribosomal subunit protein uL1 (231 aa).

Belongs to the universal ribosomal protein uL1 family. Part of the 50S ribosomal subunit.

Its function is as follows. Binds directly to 23S rRNA. The L1 stalk is quite mobile in the ribosome, and is involved in E site tRNA release. In terms of biological role, protein L1 is also a translational repressor protein, it controls the translation of the L11 operon by binding to its mRNA. The sequence is that of Large ribosomal subunit protein uL1 from Agrobacterium fabrum (strain C58 / ATCC 33970) (Agrobacterium tumefaciens (strain C58)).